The following is a 302-amino-acid chain: Arginase (302 aa).

4 residues coordinate Mn(2+): His-103, Asp-126, His-128, and Asp-130. Substrate contacts are provided by residues 128–132, 139–141, and Asp-180; these read HGDLN and SGN. The Mn(2+) site is built by Asp-229 and Asp-231. Residues Thr-243 and Glu-274 each coordinate substrate.

It belongs to the arginase family. It depends on Mn(2+) as a cofactor.

The enzyme catalyses L-arginine + H2O = urea + L-ornithine. It participates in nitrogen metabolism; urea cycle; L-ornithine and urea from L-arginine: step 1/1. The protein is Arginase (arg) of Staphylococcus aureus (strain COL).